The following is a 330-amino-acid chain: Ferredoxin--NADP reductase (330 aa).

Residues Glu-35, Gln-43, Tyr-48, Val-90, Phe-123, Asp-285, and Thr-326 each contribute to the FAD site.

Belongs to the ferredoxin--NADP reductase type 2 family. In terms of assembly, homodimer. The cofactor is FAD.

The enzyme catalyses 2 reduced [2Fe-2S]-[ferredoxin] + NADP(+) + H(+) = 2 oxidized [2Fe-2S]-[ferredoxin] + NADPH. The sequence is that of Ferredoxin--NADP reductase from Streptococcus pyogenes serotype M1.